The primary structure comprises 427 residues: tRNA(Ile)-lysidine synthase (427 aa).

Residue 25–30 coordinates ATP; it reads SGGLDS.

Belongs to the tRNA(Ile)-lysidine synthase family.

It is found in the cytoplasm. It carries out the reaction cytidine(34) in tRNA(Ile2) + L-lysine + ATP = lysidine(34) in tRNA(Ile2) + AMP + diphosphate + H(+). In terms of biological role, ligates lysine onto the cytidine present at position 34 of the AUA codon-specific tRNA(Ile) that contains the anticodon CAU, in an ATP-dependent manner. Cytidine is converted to lysidine, thus changing the amino acid specificity of the tRNA from methionine to isoleucine. The protein is tRNA(Ile)-lysidine synthase of Histophilus somni (strain 2336) (Haemophilus somnus).